A 92-amino-acid polypeptide reads, in one-letter code: Small ribosomal subunit protein uS19 (92 aa).

Belongs to the universal ribosomal protein uS19 family.

Functionally, protein S19 forms a complex with S13 that binds strongly to the 16S ribosomal RNA. The polypeptide is Small ribosomal subunit protein uS19 (Prochlorococcus marinus (strain MIT 9301)).